The following is a 645-amino-acid chain: Cytochrome c oxidase subunit 1 (645 aa).

A helical membrane pass occupies residues Leu8–Ile28. 2 residues coordinate Ca(2+): Glu31 and Gly36. Fe(II)-heme a is bound at residue His54. Helical transmembrane passes span Leu56–Ile76, Leu90–Phe110, Val247–Ile267, Val282–Thr302, Leu337–Ala357, Ile376–Leu396, Ile410–Ala430, and Leu438–Met458. His343 lines the Cu cation pocket. Positions His343–Tyr347 form a cross-link, 1'-histidyl-3'-tyrosine (His-Tyr). Residue Tyr347 participates in O2 binding. Positions 392 and 393 each coordinate Cu cation. Mg(2+)-binding residues include His470 and Asp471. 3 consecutive transmembrane segments (helical) span residues Val475–Leu495, Phe513–Leu533, and Leu555–Phe575. His478 provides a ligand contact to heme a3. Residue His480 coordinates Fe(II)-heme a.

Belongs to the heme-copper respiratory oxidase family. Component of the cytochrome c oxidase (complex IV, CIV), a multisubunit enzyme composed of a catalytic core of 3 subunits and several supernumerary subunits. The complex exists as a monomer or a dimer and forms supercomplexes (SCs) in the inner mitochondrial membrane with ubiquinol-cytochrome c oxidoreductase (cytochrome b-c1 complex, complex III, CIII). Heme serves as cofactor. Requires Cu cation as cofactor.

The protein resides in the mitochondrion inner membrane. The catalysed reaction is 4 Fe(II)-[cytochrome c] + O2 + 8 H(+)(in) = 4 Fe(III)-[cytochrome c] + 2 H2O + 4 H(+)(out). It functions in the pathway energy metabolism; oxidative phosphorylation. Functionally, component of the cytochrome c oxidase, the last enzyme in the mitochondrial electron transport chain which drives oxidative phosphorylation. The respiratory chain contains 3 multisubunit complexes succinate dehydrogenase (complex II, CII), ubiquinol-cytochrome c oxidoreductase (cytochrome b-c1 complex, complex III, CIII) and cytochrome c oxidase (complex IV, CIV), that cooperate to transfer electrons derived from NADH and succinate to molecular oxygen, creating an electrochemical gradient over the inner membrane that drives transmembrane transport and the ATP synthase. Cytochrome c oxidase is the component of the respiratory chain that catalyzes the reduction of oxygen to water. Electrons originating from reduced cytochrome c in the intermembrane space (IMS) are transferred via the dinuclear copper A center (CU(A)) of subunit 2 and heme A of subunit 1 to the active site in subunit 1, a binuclear center (BNC) formed by heme A3 and copper B (CU(B)). The BNC reduces molecular oxygen to 2 water molecules using 4 electrons from cytochrome c in the IMS and 4 protons from the mitochondrial matrix. The protein is Cytochrome c oxidase subunit 1 (COI) of Paramecium tetraurelia.